A 541-amino-acid polypeptide reads, in one-letter code: DNA ligase 1 (541 aa).

Glu234 provides a ligand contact to ATP. The active-site N6-AMP-lysine intermediate is the Lys236. Residues Arg241, Arg256, Glu286, Phe325, Arg398, and Lys404 each contribute to the ATP site.

The protein belongs to the ATP-dependent DNA ligase family. Requires Mg(2+) as cofactor.

It carries out the reaction ATP + (deoxyribonucleotide)n-3'-hydroxyl + 5'-phospho-(deoxyribonucleotide)m = (deoxyribonucleotide)n+m + AMP + diphosphate.. In terms of biological role, DNA ligase that seals nicks in double-stranded DNA during DNA replication, DNA recombination and DNA repair. The protein is DNA ligase 1 of Korarchaeum cryptofilum (strain OPF8).